The sequence spans 432 residues: Selenocysteine lyase (432 aa).

M1 is modified (N-acetylmethionine). A disordered region spans residues 1 to 20 (MDVARNGARGSVESPPNRKV). S117 carries the phosphoserine modification. N6-(pyridoxal phosphate)lysine is present on K247. The S-selanylcysteine intermediate role is filled by C375.

It belongs to the class-V pyridoxal-phosphate-dependent aminotransferase family. In terms of assembly, homodimer. It depends on pyridoxal 5'-phosphate as a cofactor.

Its subcellular location is the cytoplasm. The protein localises to the cytosol. The catalysed reaction is L-selenocysteine + AH2 = hydrogenselenide + L-alanine + A + H(+). Functionally, catalyzes the decomposition of L-selenocysteine to L-alanine and elemental selenium. This is Selenocysteine lyase (Scly) from Rattus norvegicus (Rat).